The following is a 206-amino-acid chain: Protein Nef (206 aa).

Glycine 2 carries N-myristoyl glycine; by host lipidation. Position 6 is a phosphoserine; by host (serine 6). The acidic; interacts with host PACS1 and PACS2; stabilizes the interaction of NEF/MHC-I with host AP1M1; necessary for MHC-I internalization stretch occupies residues glutamate 62 to lysine 65. The SH3-binding; interaction with Src family tyrosine kinases stretch occupies residues proline 69–proline 78. The PxxP; stabilizes the interaction of NEF/MHC-I with host AP1M1; necessary for MHC-I internalization motif lies at proline 72–proline 75. The mediates dimerization, Nef-PTE1 interaction stretch occupies residues aspartate 108–tryptophan 124. The interval valine 148–valine 180 is binding to ATP6V1H. Positions leucine 164–leucine 165 match the Dileucine internalization motif; necessary for CD4 internalization motif. The Diacidic; necessary for CD4 internalization motif lies at aspartate 174–aspartate 175.

Belongs to the lentivirus primate group Nef protein family. In terms of assembly, monomer; cytosolic form. Homodimer; membrane bound form. Interacts with Nef associated p21-activated kinase (PAK2); this interaction activates PAK2. Associates with the Nef-MHC-I-AP1 complex; this complex is required for MHC-I internalization. Interacts (via C-terminus) with host PI3-kinase. Interacts with host PACS1; this interaction seems to be weak. Interacts with host PACS2. Interacts with host LCK and MAPK3; these interactions inhibit the kinase activity of the latter. Interacts with host ATP6V1H; this interaction may play a role in CD4 endocytosis. Associates with the CD4-Nef-AP2 complex; this complex is required for CD4 internalization. Interacts with host AP2 subunit alpha and AP2 subunit sigma2. Interacts with TCR-zeta chain; this interaction up-regulates the Fas ligand (FasL) surface expression. Interacts with host HCK, LYN, and SRC; these interactions activate the Src family kinases. Interacts with MAP3K5; this interaction inhibits the Fas and TNFR-mediated death signals. Interacts with beta-COP and PTE1. Interacts with human RACK1; this increases Nef phosphorylation by PKC. Interacts with TP53; this interaction decreases the half-life of TP53, protecting the infected cell against p53-mediated apoptosis. Post-translationally, the virion-associated Nef proteins are cleaved by the viral protease to release the soluble C-terminal core protein. Nef is probably cleaved concomitantly with viral structural proteins on maturation of virus particles. Myristoylated. In terms of processing, phosphorylated on serine residues, probably by host PKCdelta and theta.

The protein resides in the host cell membrane. Its subcellular location is the virion. The protein localises to the secreted. It localises to the host Golgi apparatus membrane. Its function is as follows. Factor of infectivity and pathogenicity, required for optimal virus replication. Alters numerous pathways of T-lymphocyte function and down-regulates immunity surface molecules in order to evade host defense and increase viral infectivity. Alters the functionality of other immunity cells, like dendritic cells, monocytes/macrophages and NK cells. Functionally, in infected CD4(+) T-lymphocytes, down-regulates the surface MHC-I, mature MHC-II, CD4, CD28, CCR5 and CXCR4 molecules. Mediates internalization and degradation of host CD4 through the interaction of with the cytoplasmic tail of CD4, the recruitment of AP-2 (clathrin adapter protein complex 2), internalization through clathrin coated pits, and subsequent transport to endosomes and lysosomes for degradation. Diverts host MHC-I molecules to the trans-Golgi network-associated endosomal compartments by an endocytic pathway to finally target them for degradation. MHC-I down-regulation may involve AP-1 (clathrin adapter protein complex 1) or possibly Src family kinase-ZAP70/Syk-PI3K cascade recruited by PACS2. In consequence infected cells are masked for immune recognition by cytotoxic T-lymphocytes. Decreasing the number of immune receptors also prevents reinfection by more HIV particles (superinfection). Down-regulates host SERINC3 and SERINC5 thereby excluding these proteins from the viral particles. Virion infectivity is drastically higher when SERINC3 or SERINC5 are excluded from the viral envelope, because these host antiviral proteins impair the membrane fusion event necessary for subsequent virion penetration. In terms of biological role, bypasses host T-cell signaling by inducing a transcriptional program nearly identical to that of anti-CD3 cell activation. Interaction with TCR-zeta chain up-regulates the Fas ligand (FasL). Increasing surface FasL molecules and decreasing surface MHC-I molecules on infected CD4(+) cells send attacking cytotoxic CD8+ T-lymphocytes into apoptosis. Plays a role in optimizing the host cell environment for viral replication without causing cell death by apoptosis. Protects the infected cells from apoptosis in order to keep them alive until the next virus generation is ready to strike. Inhibits the Fas and TNFR-mediated death signals by blocking MAP3K5/ASK1. Decreases the half-life of TP53, protecting the infected cell against p53-mediated apoptosis. Inhibits the apoptotic signals regulated by the Bcl-2 family proteins through the formation of a Nef/PI3-kinase/PAK2 complex that leads to activation of PAK2 and induces phosphorylation of host BAD. Its function is as follows. Extracellular Nef protein targets CD4(+) T-lymphocytes for apoptosis by interacting with CXCR4 surface receptors. The sequence is that of Protein Nef from Homo sapiens (Human).